Reading from the N-terminus, the 286-residue chain is Cytosolic 5'-nucleotidase 3 (286 aa).

The active-site Nucleophile is Asp-38. Residues Asp-38 and Asp-40 each coordinate Mg(2+). Catalysis depends on Asp-40, which acts as the Proton donor. Substrate is bound by residues Glu-85, Ser-106, 153–154 (SA), and Lys-202. Position 227 (Asp-227) interacts with Mg(2+).

The protein belongs to the pyrimidine 5'-nucleotidase family.

The protein resides in the cytoplasm. The catalysed reaction is a ribonucleoside 5'-phosphate + H2O = a ribonucleoside + phosphate. Its function is as follows. Can act both as nucleotidase and as phosphotransferase. The chain is Cytosolic 5'-nucleotidase 3 (nt5c3) from Danio rerio (Zebrafish).